The primary structure comprises 791 residues: RAS guanyl-releasing protein 1 (791 aa).

Positions 49–172 (LGKLSKGASL…RLIDTAQINS (124 aa)) constitute an N-terminal Ras-GEF domain. Positions 53–106 (SKGASLDELIQMCIQAFDLDGNMGQNNELLQIMLTMHGFLIPSTELLIKLRTLY) are ras exchanger motif region; required for transforming activity. The Ras-GEF domain occupies 201–432 (EPQELAEHLT…YELSYAREPR (232 aa)). 2 consecutive EF-hand domains span residues 466-501 (HVQR…FPFS) and 502-528 (FCVM…ASSI). Positions 479, 481, 483, 485, 490, 506, 508, 510, and 517 each coordinate Ca(2+). Residues 537 to 587 (LHNFQETTYLRPTFCDNCAGFLWGVIKQGYRCKDCGMNCHKQCKELVVFEC) form a Phorbol-ester/DAG-type zinc finger. The interval 671 to 715 (TQTENETQSLCLQVPSPPRSRTPDLTSHLPISPMPSPCPSPVPTR) is disordered. The span at 672–681 (QTENETQSLC) shows a compositional bias: polar residues. Residues 702–712 (SPMPSPCPSPV) show a composition bias toward pro residues. Positions 728-783 (IRKARAELRGGKAGIQELEKEKVFLKEENTALKIQLKDAHRRVETLRAELRKYVLD) form a coiled coil.

The protein belongs to the RASGRP family.

The protein resides in the cytoplasm. It is found in the cytosol. Its subcellular location is the cell membrane. It localises to the golgi apparatus membrane. The protein localises to the endoplasmic reticulum membrane. Regulated by F-actin polymerization and probably by calcium. Functionally, functions as a diacylglycerol (DAG)-regulated nucleotide exchange factor specifically activating Ras through the exchange of bound GDP for GTP. The polypeptide is RAS guanyl-releasing protein 1 (rasgrp1) (Xenopus laevis (African clawed frog)).